The following is a 117-amino-acid chain: Non-specific lipid-transfer protein (117 aa).

An N-terminal signal peptide occupies residues 1–26; sequence MASSAFVKFTCALVMCMMVAAPLAEA. Intrachain disulfides connect Cys-29-Cys-76, Cys-39-Cys-53, Cys-54-Cys-99, and Cys-74-Cys-113.

It belongs to the plant LTP family.

In terms of biological role, plant non-specific lipid-transfer proteins transfer phospholipids as well as galactolipids across membranes. May play a role in wax or cutin deposition in the cell walls of expanding epidermal cells and certain secretory tissues. Also has fungicide activity. The chain is Non-specific lipid-transfer protein (IWF1') from Beta vulgaris (Sugar beet).